Reading from the N-terminus, the 399-residue chain is uncharacterized protein (399 aa).

The next 10 membrane-spanning stretches (helical) occupy residues Phe-7–Ile-27, Phe-33–Pro-53, Ala-79–Leu-99, Leu-131–Ile-151, Phe-153–Ile-173, Val-208–Tyr-228, Ser-242–Ile-262, Pro-296–Val-316, Leu-335–Ser-355, and Ala-357–Leu-377.

The protein belongs to the major facilitator superfamily. Drug:H(+) antiporter-3 (DHA3) (TC 2.A.1.21) family.

Its subcellular location is the cell membrane. This is an uncharacterized protein from Bacillus subtilis (strain 168).